The chain runs to 398 residues: tRNA-specific 2-thiouridylase MnmA (398 aa).

Residues 20 to 27 (AMSGGVDS) and Leu46 contribute to the ATP site. Catalysis depends on Cys114, which acts as the Nucleophile. An intrachain disulfide couples Cys114 to Cys210. Gly138 serves as a coordination point for ATP. The interaction with tRNA stretch occupies residues 160 to 162 (RDQ). Residue Cys210 is the Cysteine persulfide intermediate of the active site.

The protein belongs to the MnmA/TRMU family.

Its subcellular location is the cytoplasm. The catalysed reaction is S-sulfanyl-L-cysteinyl-[protein] + uridine(34) in tRNA + AH2 + ATP = 2-thiouridine(34) in tRNA + L-cysteinyl-[protein] + A + AMP + diphosphate + H(+). In terms of biological role, catalyzes the 2-thiolation of uridine at the wobble position (U34) of tRNA, leading to the formation of s(2)U34. This is tRNA-specific 2-thiouridylase MnmA from Brucella suis (strain ATCC 23445 / NCTC 10510).